The primary structure comprises 450 residues: uncharacterized protein (450 aa).

Lys-283 is modified (N6-(pyridoxal phosphate)lysine).

Belongs to the class-III pyridoxal-phosphate-dependent aminotransferase family. It depends on pyridoxal 5'-phosphate as a cofactor.

Functionally, essential for glycerol catabolism. This is an uncharacterized protein from Bacillus subtilis (strain 168).